Consider the following 262-residue polypeptide: uncharacterized protein (262 aa).

Disordered stretches follow at residues 1 to 30 (MGKKKFIENEDGTTEVQETESEAPKDKKEK) and 232 to 262 (EEEEVEDEADEETDVKEKVKEEEDEDEDMEE). Composition is skewed to acidic residues over residues 9-21 (NEDGTTEVQETES), 232-245 (EEEEVEDEADEETD), and 253-262 (EEDEDEDMEE).

This is an uncharacterized protein from Caenorhabditis elegans.